The sequence spans 162 residues: Caveolin-2 (162 aa).

Residues 1 to 86 (MGLETEKADV…FEMSKYVIYK (86 aa)) lie on the Cytoplasmic side of the membrane. Tyr-19 bears the Phosphotyrosine; by SRC mark. Phosphoserine occurs at positions 20 and 23. Tyr-27 carries the post-translational modification Phosphotyrosine; by SRC. Residues 87-107 (FLTVFLAIPLAFAAGILFATL) constitute an intramembrane region (helical). Residues 108–162 (SCLHIWIIMPFVKTCLMVLPSVQTIWKSVTDVVIAPLCTSIGRSFSSVSLQLSHD) lie on the Cytoplasmic side of the membrane.

The protein belongs to the caveolin family. Monomer or homodimer. Interacts with CAV1; the interaction forms a stable heterooligomeric complex that is required for targeting to lipid rafts and for caveolae formation. Tyrosine phosphorylated forms do not form heterooligomers with the Tyr-19-phosphorylated form existing as a monomer or dimer, and the Tyr-27-form as a monomer only. Interacts (tyrosine phosphorylated form) with the SH2 domain-containing proteins, RASA1, NCK1 and SRC. Interacts (tyrosine phosphorylated form) with INSR, the interaction (Tyr-27-phosphorylated form) is increased on insulin stimulation. Interacts (Tyr-19 phosphorylated form) with MAPK1 (phosphorylated form); the interaction, promoted by insulin, leads to nuclear location and MAPK1 activation. Interacts with STAT3; the interaction is increased on insulin-induced tyrosine phosphorylation leading to STAT activation. Phosphorylated on serine and tyrosine residues. CAV1 promotes phosphorylation on Ser-23 which then targets the complex to the plasma membrane, lipid rafts and caveolae. Phosphorylation on both Tyr-19 and Tyr-27 is required for insulin-induced 'Ser-727' phosphorylation of STAT3 and its activation. Phosphorylation on Tyr-19 is required for insulin-induced phosphorylation of MAPK1 and DNA binding of STAT3. Tyrosine phosphorylation is induced by both EGF and insulin. As to expression, expressed in aortic endothelial cells.

It localises to the nucleus. The protein resides in the cytoplasm. Its subcellular location is the golgi apparatus membrane. The protein localises to the cell membrane. It is found in the membrane. It localises to the caveola. In terms of biological role, may act as a scaffolding protein within caveolar membranes. Interacts directly with G-protein alpha subunits and can functionally regulate their activity. Acts as an accessory protein in conjunction with CAV1 in targeting to lipid rafts and driving caveolae formation. Positive regulator of cellular mitogenesis of the MAPK signaling pathway. Required for the insulin-stimulated nuclear translocation and activation of MAPK1 and STAT3, and the subsequent regulation of cell cycle progression. In Bos taurus (Bovine), this protein is Caveolin-2 (CAV2).